The following is a 136-amino-acid chain: Protein Tat (136 aa).

Positions 22 to 37 are cysteine-rich; sequence CTNCYCKKCCFHCPVC. The interval 38–48 is core; it reads FTKKALGISYG. Residues 48–57 are compositionally biased toward basic residues; sequence GRKRRGRKSA. A disordered region spans residues 48–136; sequence GRKRRGRKSA…SGSSGSACKH (89 aa). The Nuclear localization signal, and RNA-binding (TAR) signature appears at 49-55; sequence RKRRGRK. Residues 58-73 show a composition bias toward polar residues; sequence VHSTNNQDPVRQQSLP. A compositionally biased stretch (low complexity) spans 104-120; that stretch reads SSVSSGRTSGTSSSGYT. A compositionally biased stretch (polar residues) spans 123 to 136; that stretch reads FKTSSGSSGSACKH.

Belongs to the lentiviruses Tat family. Interacts with host CCNT1. Associates with the P-TEFb complex composed at least of Tat, P-TEFb (CDK9 and CCNT1), TAR RNA, RNA Pol II. Interacts with CCNT2; the resulting complex is unable to bind to TAR RNA.

It localises to the host nucleus. It is found in the host nucleolus. Its function is as follows. Transcriptional activator that increases RNA Pol II processivity, thereby increasing the level of full-length viral transcripts. Recognizes a hairpin structure at the 5'-LTR of the nascent viral mRNAs referred to as the transactivation responsive RNA element (TAR) and recruits the cyclin T1-CDK9 complex (P-TEFb complex) that will in turn hyperphosphorylate the RNA polymerase II to allow efficient elongation. The CDK9 component of P-TEFb and other Tat-activated kinases hyperphosphorylate the C-terminus of RNA Pol II that becomes stabilized and much more processive. Extracellular circulating Tat can be endocytosed by surrounding uninfected cells via the binding to several surface receptors. Endosomal low pH allows Tat to cross the endosome membrane to enter the cytosol and eventually further translocate into the nucleus, thereby inducing severe cell dysfunctions ranging from cell activation to cell death. Through. The protein is Protein Tat of Simian immunodeficiency virus (isolate TAN1) (SIV-cpz).